Consider the following 197-residue polypeptide: MRQAEIVRETKETKVRLAVNLDGTGRASIATGIGFFDHMLDLLARHARFDLEVEAKGDLHVDFHHTTEDVGIVLGQAIRRALGDMRGITRYADLHLPMDETLTRVALDISGRPFLVFRTEFKVGKIGEFDTELVREFFQAFASNAGVTLHVETLYGDNAHHIAESCFKGLARALRAAVAIDPAAAGEIPSTKGALGG.

This sequence belongs to the imidazoleglycerol-phosphate dehydratase family.

It localises to the cytoplasm. It carries out the reaction D-erythro-1-(imidazol-4-yl)glycerol 3-phosphate = 3-(imidazol-4-yl)-2-oxopropyl phosphate + H2O. It participates in amino-acid biosynthesis; L-histidine biosynthesis; L-histidine from 5-phospho-alpha-D-ribose 1-diphosphate: step 6/9. In Azorhizobium caulinodans (strain ATCC 43989 / DSM 5975 / JCM 20966 / LMG 6465 / NBRC 14845 / NCIMB 13405 / ORS 571), this protein is Imidazoleglycerol-phosphate dehydratase.